The primary structure comprises 93 residues: Alpha-defensin 5 (93 aa).

A signal peptide spans 1–19; sequence MKTFVLLSALVLLAFQVQA. Positions 20–58 are excised as a propeptide; the sequence is DPIHKTDEETNTEEQPGEEDQAVSISFGGQEGSALHEEL. Intrachain disulfides connect cysteine 64–cysteine 92, cysteine 66–cysteine 81, and cysteine 71–cysteine 91.

This sequence belongs to the alpha-defensin family.

It is found in the secreted. Functionally, probably contributes to the antimicrobial barrier function of the small bowel mucosa. This Mus musculus (Mouse) protein is Alpha-defensin 5 (Defa5).